The sequence spans 825 residues: AP-3 complex subunit delta (825 aa).

HEAT repeat units follow at residues 131–168, 169–205, 207–243, 244–281, 285–323, 324–360, 363–400, 469–513, 515–547, and 548–584; these read GLAR…QYPE, AISA…RAPK, YLEF…YEPR, LVKK…LVGH, DKLA…THPS, LVSA…KENI, IVKT…KSTY, EKRT…LAHR, LLQA…LWVE, and KIVS…IVNT. Positions 787–825 are disordered; sequence STNQGSMGDIVLETKSPIRVEKKKSKKKKKKKEKTSGKE. Residues 807–819 show a composition bias toward basic residues; the sequence is EKKKSKKKKKKKE.

The protein belongs to the adaptor complexes large subunit family. Adaptor protein complex 3 (AP-3) is a heterotetramer composed of 2 large adaptins (apl5 and apl6), a medium adaptin (apm3) and a small adaptin (aps3).

It is found in the golgi apparatus. The protein localises to the cytoplasmic vesicle. The protein resides in the clathrin-coated vesicle membrane. Its function is as follows. Part of the AP-3 complex, an adaptor-related complex which is not clathrin-associated. The complex is associated with the Golgi region as well as more peripheral structures. It facilitates the budding of vesicles from the Golgi membrane and may be directly involved in trafficking to the vacuole. In Schizosaccharomyces pombe (strain 972 / ATCC 24843) (Fission yeast), this protein is AP-3 complex subunit delta (apl5).